Reading from the N-terminus, the 787-residue chain is Pyridoxal-dependent decarboxylase domain-containing protein 1 (787 aa).

The span at 26–44 (MLEKSPRRTEEENGKKPVS) shows a compositional bias: basic and acidic residues. Residues 26–52 (MLEKSPRRTEEENGKKPVSEDIPGPLQ) form a disordered region. A Phosphoserine modification is found at Ser652. Residues 682-787 (QGTGVTPPPT…SQVEELERLR (106 aa)) form a disordered region. Thr687 and Thr691 each carry phosphothreonine. Ser710, Ser718, Ser722, and Ser748 each carry phosphoserine. Residues 725-748 (HIEDLEKVEQLSSGLEHDNLEAHS) are compositionally biased toward basic and acidic residues. Positions 759–771 (TARQTEALQNQAQ) are enriched in polar residues. Basic and acidic residues predominate over residues 772–787 (HQEDDHSQVEELERLR). The residue at position 778 (Ser778) is a Phosphoserine.

This sequence belongs to the group II decarboxylase family. Pyridoxal 5'-phosphate is required as a cofactor.

The chain is Pyridoxal-dependent decarboxylase domain-containing protein 1 (Pdxdc1) from Mus musculus (Mouse).